Reading from the N-terminus, the 101-residue chain is Small ribosomal subunit protein uS14 (101 aa).

Belongs to the universal ribosomal protein uS14 family. In terms of assembly, part of the 30S ribosomal subunit. Contacts proteins S3 and S10.

Its function is as follows. Binds 16S rRNA, required for the assembly of 30S particles and may also be responsible for determining the conformation of the 16S rRNA at the A site. The sequence is that of Small ribosomal subunit protein uS14 from Orientia tsutsugamushi (strain Boryong) (Rickettsia tsutsugamushi).